The chain runs to 398 residues: Minor cardiolipin synthase ClsB (398 aa).

A helical transmembrane segment spans residues 3 to 23 (VFIVIMIIVVIFFALILLDIF). PLD phosphodiesterase domains lie at 141-168 (MQKR…AEEY) and 311-338 (YQGF…DKRS).

This sequence belongs to the phospholipase D family. Cardiolipin synthase subfamily.

Its subcellular location is the cell membrane. Its function is as follows. Involved in the biosynthesis of cardiolipin. The polypeptide is Minor cardiolipin synthase ClsB (clsB) (Bacillus subtilis (strain 168)).